Here is a 312-residue protein sequence, read N- to C-terminus: DNA-directed RNA polymerase subunit alpha (312 aa).

An alpha N-terminal domain (alpha-NTD) region spans residues 1-229; that stretch reads MLQYQIDRID…ELFQPLATVT (229 aa). The tract at residues 246–312 is alpha C-terminal domain (alpha-CTD); that stretch reads IPLEELNLSV…ISIPQSRTSV (67 aa).

Belongs to the RNA polymerase alpha chain family. In cyanobacteria the RNAP catalytic core is composed of 2 alpha, 1 beta, 1 beta', 1 gamma and 1 omega subunit. When a sigma factor is associated with the core the holoenzyme is formed, which can initiate transcription.

It carries out the reaction RNA(n) + a ribonucleoside 5'-triphosphate = RNA(n+1) + diphosphate. Its function is as follows. DNA-dependent RNA polymerase catalyzes the transcription of DNA into RNA using the four ribonucleoside triphosphates as substrates. The sequence is that of DNA-directed RNA polymerase subunit alpha from Prochlorococcus marinus subsp. pastoris (strain CCMP1986 / NIES-2087 / MED4).